A 222-amino-acid polypeptide reads, in one-letter code: Small ribosomal subunit protein eS1 (222 aa).

This sequence belongs to the eukaryotic ribosomal protein eS1 family.

The sequence is that of Small ribosomal subunit protein eS1 from Pyrobaculum neutrophilum (strain DSM 2338 / JCM 9278 / NBRC 100436 / V24Sta) (Thermoproteus neutrophilus).